A 146-amino-acid chain; its full sequence is MRNEMNLSFSAQSQNESFARVTVGAFIAQLDPTMDEMTEIKTVVSEAVTNAIIHGYQGQPDGVVYIHASIDQGVFELTIRDEGMGISDVEEARQPLYTTKPELERSGMGFTIMENFMDEVKVVSEPMIGTTVFLKKHLTKSKAICN.

The protein belongs to the anti-sigma-factor family.

It carries out the reaction L-seryl-[protein] + ATP = O-phospho-L-seryl-[protein] + ADP + H(+). The enzyme catalyses L-threonyl-[protein] + ATP = O-phospho-L-threonyl-[protein] + ADP + H(+). Binds to sigma F and blocks its ability to form an RNA polymerase holoenzyme (E-sigma F). Phosphorylates SpoIIAA on a serine residue. This phosphorylation may enable SpoIIAA to act as an anti-anti-sigma factor that counteracts SpoIIAB and thus releases sigma F from inhibition. The chain is Anti-sigma F factor from Halalkalibacterium halodurans (strain ATCC BAA-125 / DSM 18197 / FERM 7344 / JCM 9153 / C-125) (Bacillus halodurans).